Consider the following 762-residue polypeptide: Molybdenum cofactor sulfurase 2 (762 aa).

Residue K234 is modified to N6-(pyridoxal phosphate)lysine. C400 is a catalytic residue. In terms of domain architecture, MOSC spans 590–738 (AWISKALRMP…LECGSILEPV (149 aa)).

This sequence belongs to the class-V pyridoxal-phosphate-dependent aminotransferase family. MOCOS subfamily. The cofactor is pyridoxal 5'-phosphate.

The enzyme catalyses Mo-molybdopterin + L-cysteine + AH2 = thio-Mo-molybdopterin + L-alanine + A + H2O. In terms of biological role, sulfurates the molybdenum cofactor. Sulfation of molybdenum is essential for xanthine dehydrogenase (XDH) and aldehyde oxidase (ADO) enzymes in which molybdenum cofactor is liganded by 1 oxygen and 1 sulfur atom in active form. This chain is Molybdenum cofactor sulfurase 2, found in Aedes aegypti (Yellowfever mosquito).